Consider the following 236-residue polypeptide: Reticulon-3 (236 aa).

Low complexity predominate over residues 1 to 24 (MAEPSAATQSPSISSSSSGAEPSA). The disordered stretch occupies residues 1–31 (MAEPSAATQSPSISSSSSGAEPSAPGGGGSP). N-acetylalanine is present on A2. At 2–67 (AEPSAATQSP…KKTGFVFGTT (66 aa)) the chain is on the cytoplasmic side. A Phosphoserine modification is found at S30. The Reticulon domain occupies 48 to 236 (VHDLIFWRDV…LPGIAKKKAE (189 aa)). Residues 68-91 (LIMLLSLAAFSVISVVSYLILALL) constitute an intramembrane region (helical). At 92-151 (SVTISFRIYKSVIQAVQKSEEGHPFKAYLDVDITLSSEAFHNYMNAAMVHINRALKLIIR) the chain is on the cytoplasmic side. The segment at residues 152–172 (LFLVEDLVDSLKLAVFMWLMT) is an intramembrane region (helical). Topologically, residues 173–176 (YVGA) are cytoplasmic. An intramembrane region (helical) is located at residues 177 to 197 (VFNGITLLILAELLIFSVPIV). The interval 191-236 (IFSVPIVYEKYKTQIDHYVGIARDQTKSIVEKIQAKLPGIAKKKAE) is interaction with FADD. Residues 198 to 236 (YEKYKTQIDHYVGIARDQTKSIVEKIQAKLPGIAKKKAE) are Cytoplasmic-facing. The tract at residues 204-206 (QID) is interaction with BACE1.

As to quaternary structure, homodimer. Interacts with RTN4. Interacts with BACE1, BACE2, BCL2 and FADD. Interacts with ATL1 and ATL2. Interacts with TMEM33. Interacts with ZFYVE27 and with KIF5A in a ZFYVE27-dependent manner. Interacts with RIGI. Interacts with TRIM25.

The protein localises to the endoplasmic reticulum membrane. It is found in the golgi apparatus membrane. Functionally, may be involved in membrane trafficking in the early secretory pathway. Inhibits BACE1 activity and amyloid precursor protein processing. May induce caspase-8 cascade and apoptosis. May favor BCL2 translocation to the mitochondria upon endoplasmic reticulum stress. Induces the formation of endoplasmic reticulum tubules. Acts also as an inflammation-resolving regulator by interacting with both TRIM25 and RIGI, subsequently impairing RIGI 'Lys-63'-linked polyubiquitination leading to IRF3 and NF-kappa-B inhibition. The protein is Reticulon-3 (RTN3) of Pongo abelii (Sumatran orangutan).